A 192-amino-acid chain; its full sequence is Probable nicotinate-nucleotide adenylyltransferase (192 aa).

It belongs to the NadD family.

The catalysed reaction is nicotinate beta-D-ribonucleotide + ATP + H(+) = deamido-NAD(+) + diphosphate. Its pathway is cofactor biosynthesis; NAD(+) biosynthesis; deamido-NAD(+) from nicotinate D-ribonucleotide: step 1/1. Catalyzes the reversible adenylation of nicotinate mononucleotide (NaMN) to nicotinic acid adenine dinucleotide (NaAD). This chain is Probable nicotinate-nucleotide adenylyltransferase, found in Cytophaga hutchinsonii (strain ATCC 33406 / DSM 1761 / CIP 103989 / NBRC 15051 / NCIMB 9469 / D465).